A 133-amino-acid chain; its full sequence is Mitochondrial import inner membrane translocase subunit TIM17-3 (133 aa).

The next 4 helical transmembrane spans lie at 15 to 35 (IVNAIGYAFGAGAVGGSVYHF), 63 to 83 (GGTFAVFGGLLSTFDYALVRI), 90 to 105 (WNSIVAGAATGGVLSI), and 115 to 128 (SAVMFGFFLAVLNP).

Belongs to the Tim17/Tim22/Tim23 family. Component of the TIM17:23 complex at least composed of TIM23, TIM17 and TIM50. The complex interacts with the TIM44 component of the PAM complex. In terms of tissue distribution, expressed in cotyledons, roots, flowers and leaves.

Its subcellular location is the mitochondrion inner membrane. Essential component of the TIM17:23 complex, a complex that mediates the translocation of transit peptide-containing proteins across the mitochondrial inner membrane. Links the inner and outer membranes. The sequence is that of Mitochondrial import inner membrane translocase subunit TIM17-3 (TIM17-3) from Arabidopsis thaliana (Mouse-ear cress).